Consider the following 1894-residue polypeptide: Plexin-A1 (1894 aa).

An N-terminal signal peptide occupies residues 1–27; that stretch reads MPLPPLSSRTLLLLLLLLLRGVWIAIS. A Sema domain is found at 28–510; sequence SPPAGLGPQP…TEKQVTQVPV (483 aa). Topologically, residues 28-1242 are extracellular; sequence SPPAGLGPQP…VYSDSLLTLP (1215 aa). Asn-75 is a glycosylation site (N-linked (GlcNAc...) asparagine). 10 disulfide bridges follow: Cys-93-Cys-102, Cys-128-Cys-136, Cys-284-Cys-405, Cys-300-Cys-356, Cys-374-Cys-393, Cys-513-Cys-530, Cys-519-Cys-561, Cys-522-Cys-539, Cys-533-Cys-545, and Cys-596-Cys-615. N-linked (GlcNAc...) asparagine glycosylation is found at Asn-658, Asn-670, and Asn-699. IPT/TIG domains lie at 862–957, 959–1043, 1046–1145, and 1148–1234; these read PKIL…FTFV, PTFY…YNYT, PTIL…FLYY, and PVLE…LQVY. Asn-1041 carries an N-linked (GlcNAc...) asparagine glycan. N-linked (GlcNAc...) asparagine glycosylation is found at Asn-1185 and Asn-1210. Residues 1243–1263 form a helical membrane-spanning segment; the sequence is AIVGIGGGGGLLLLVIVAVLI. The stretch at 1262-1315 forms a coiled coil; the sequence is LIAYKRKSRDADRTLKRLQLQMDNLESRVALECKEAFAELQTDIHELTSDLDGA. The Cytoplasmic segment spans residues 1264-1894; that stretch reads AYKRKSRDAD…QVVDTMALSS (631 aa).

It belongs to the plexin family. As to quaternary structure, interacts directly with NRP1 and NRP2. Interacts with PLXN1B. Interacts with FARP2, RND1 and KDR/VEGFR2. Binding of SEMA3A leads to dissociation of FARP2. Interacts with CRMP1, DPYSL2/CRMP2, DPYSL3/CRMP3 and DPYSL4/CRMP4. Interacts (via TIG domains) with TREM2; the interaction mediates SEMA6D binding and signaling through TYROBP. In terms of tissue distribution, ubiquitous.

It localises to the cell membrane. Functionally, coreceptor for SEMA3A, SEMA3C, SEMA3F and SEMA6D. Necessary for signaling by class 3 semaphorins and subsequent remodeling of the cytoskeleton. Plays a role in axon guidance, invasive growth and cell migration. Class 3 semaphorins bind to a complex composed of a neuropilin and a plexin. The plexin modulates the affinity of the complex for specific semaphorins, and its cytoplasmic domain is required for the activation of down-stream signaling events in the cytoplasm. Acts as coreceptor of TREM2 for SEMA6D in dendritic cells and is involved in the generation of immune responses and skeletal homeostasis. The protein is Plexin-A1 (Plxna1) of Mus musculus (Mouse).